A 323-amino-acid chain; its full sequence is ComG operon protein 2 (323 aa).

A run of 3 helical transmembrane segments spans residues 93-113, 143-163, and 296-316; these read YPLF…SIII, LVII…WLVF, and MIYG…LVPM.

The protein belongs to the GSP F family.

The protein localises to the cell membrane. In terms of biological role, required for transformation and DNA binding. The polypeptide is ComG operon protein 2 (comGB) (Bacillus subtilis (strain 168)).